Reading from the N-terminus, the 101-residue chain is Acylphosphatase (101 aa).

The region spanning 13–101 (RARILVRGVV…GEFRGFEIRY (89 aa)) is the Acylphosphatase-like domain. Active-site residues include R28 and N46.

The protein belongs to the acylphosphatase family.

The enzyme catalyses an acyl phosphate + H2O = a carboxylate + phosphate + H(+). This is Acylphosphatase (acyP) from Aeropyrum pernix (strain ATCC 700893 / DSM 11879 / JCM 9820 / NBRC 100138 / K1).